The chain runs to 141 residues: Ribonuclease VapC16 (141 aa).

Asp-99 contributes to the Mg(2+) binding site. The interval 99 to 141 (DHAHTAHRRASGSPSTSIRPCAHRPGTAAWPDDHHRRRPVSCL) is disordered.

It belongs to the PINc/VapC protein family. The cofactor is Mg(2+).

Toxic component of a type II toxin-antitoxin (TA) system. An RNase. The cognate antitoxin is VapB16. In Mycobacterium tuberculosis (strain ATCC 25618 / H37Rv), this protein is Ribonuclease VapC16.